Reading from the N-terminus, the 344-residue chain is G-protein coupled receptor str-217 (344 aa).

At 1-10 the chain is on the extracellular side; sequence MLLFQKTLSR. Residues 11–31 traverse the membrane as a helical segment; sequence VAAPISVAANLILILLIIFKS. The Cytoplasmic segment spans residues 32–39; it reads PAQMGNYK. Residues 40 to 60 traverse the membrane as a helical segment; the sequence is YLLIGLSIFEMSYAVLDVVSE. The Extracellular segment spans residues 61 to 88; the sequence is TTVLSIKKSFVVVVPYKDRSFGQETAMD. Residues 89–109 traverse the membrane as a helical segment; the sequence is INLIYCGFFGFSMGMFVVIFA. Topologically, residues 110-128 are cytoplasmic; sequence YRSFLTTGNTILRKFEGFK. Residues 129-149 traverse the membrane as a helical segment; that stretch reads IISWFAYPLFYAIVWILVAWG. Topologically, residues 150–195 are extracellular; that stretch reads PLASFPEMDIVVRPFLLDELNMTVDEVAYTGRLFYSTIDNSLRYSA. Asn-170 carries N-linked (GlcNAc...) asparagine glycosylation. Residues 196–216 traverse the membrane as a helical segment; sequence ILTGVLQWVLTASSLFLVIFF. At 217–256 the chain is on the cytoplasmic side; the sequence is GLRCYFHYGKLVQLTDVQSIRLRQLQNQLFLALVCQATVP. A helical transmembrane segment spans residues 257-277; it reads LILMHIPVTILYTCCVLNIVF. At 278-279 the chain is on the extracellular side; that stretch reads NP. The helical transmembrane segment at 280–300 threads the bilayer; sequence FSVATTIALFPAIDPLPTIFI. Topologically, residues 301 to 344 are cytoplasmic; it reads VKNYRVALFEFVCPSCLCWSETLKHMGSNRITSYRSNTVNALSM.

Belongs to the nematode receptor-like protein str family. As to expression, expressed in the ADL chemosensory neurons.

The protein localises to the cell membrane. Probable G-protein coupled receptor. This is G-protein coupled receptor str-217 from Caenorhabditis elegans.